A 341-amino-acid polypeptide reads, in one-letter code: uncharacterized protein (341 aa).

4 WD repeats span residues 19–59 (SLGS…QVHT), 106–145 (GHTD…RCLG), 252–293 (PFSN…HHKG), and 303–341 (VSQS…ALTS).

The protein resides in the cytoplasm. It localises to the nucleus. This is an uncharacterized protein from Schizosaccharomyces pombe (strain 972 / ATCC 24843) (Fission yeast).